The following is a 1250-amino-acid chain: DNA topoisomerase 3-alpha (1250 aa).

The Toprim domain occupies 27 to 171 (KYLNVAEKND…NISVYRATFS (145 aa)). Residues 189 to 610 (DKRQSDAVDV…EQIAKYKQAY (422 aa)) enclose the Topo IA-type catalytic domain. Tyr356 (O-(5'-phospho-DNA)-tyrosine intermediate) is an active-site residue. Positions 769–835 (RGGGGGPGPG…GTGGGGLGGG (67 aa)) are enriched in gly residues. Disordered regions lie at residues 769–899 (RGGG…GLDE) and 953–1035 (NGGT…TVLC). Basic and acidic residues predominate over residues 840-865 (PGGESKKSATKKPPNEPKPKKTKEPK). Over residues 866 to 886 (AAPNKKTSSKSSGSIRSFFTS) the composition is skewed to low complexity. Over residues 956-965 (TMPTESNGDQ) the composition is skewed to polar residues. Composition is skewed to basic and acidic residues over residues 966–994 (QLDKSLSEWIKEQDKADERPMLWGTRERA) and 1012–1021 (PRWDSVERDS). Residues 1022–1033 (TPPSSVPESETV) are compositionally biased toward low complexity. The Zn(2+) site is built by Cys1035, Cys1038, Cys1061, and Cys1067. Residues 1035–1076 (CTGCQQPARQNTVRKNGPNLGRLYYKCPKPDECNFFQWADEP) form a GRF-type 1 zinc finger. The tract at residues 1069–1150 (FFQWADEPPS…TATPGDGEEV (82 aa)) is disordered. Residues 1079 to 1101 (SAKSKNSTGSAPQSTTSWGSNRV) are compositionally biased toward polar residues. The segment covering 1106-1134 (SIQQSNSQRGQSSMRSNSSSTVTITQTKT) has biased composition (low complexity). Residues Cys1152, Cys1154, Cys1177, and Cys1184 each coordinate Zn(2+). The segment at 1152–1193 (CNCGQLASQLTVRKDGPNQGRPFYACPTREKSCGFFKWGDED) adopts a GRF-type 2 zinc-finger fold. Residues 1188 to 1231 (KWGDEDQNQGASSTSWGSANRNPPGRSQPTAITSDGPKTRRCGL) form a disordered region. Over residues 1195–1220 (NQGASSTSWGSANRNPPGRSQPTAIT) the composition is skewed to polar residues.

This sequence belongs to the type IA topoisomerase family.

It carries out the reaction ATP-independent breakage of single-stranded DNA, followed by passage and rejoining.. Releases the supercoiling and torsional tension of DNA introduced during the DNA replication and transcription by transiently cleaving and rejoining one strand of the DNA duplex. Introduces a single-strand break via transesterification at a target site in duplex DNA. The scissile phosphodiester is attacked by the catalytic tyrosine of the enzyme, resulting in the formation of a DNA-(5'-phosphotyrosyl)-enzyme intermediate and the expulsion of a 3'-OH DNA strand. The free DNA strand than undergoes passage around the unbroken strand thus removing DNA supercoils. Finally, in the religation step, the DNA 3'-OH attacks the covalent intermediate to expel the active-site tyrosine and restore the DNA phosphodiester backbone. Weakly relaxes negative supercoils and displays a distinct preference for binding single-stranded DNA. The chain is DNA topoisomerase 3-alpha (Top3alpha) from Drosophila melanogaster (Fruit fly).